Here is a 173-residue protein sequence, read N- to C-terminus: Galactose-6-phosphate isomerase subunit LacB (173 aa).

It belongs to the LacAB/RpiB family. As to quaternary structure, heteromultimeric protein consisting of LacA and LacB.

It carries out the reaction aldehydo-D-galactose 6-phosphate = keto-D-tagatose 6-phosphate. It functions in the pathway carbohydrate metabolism; D-galactose 6-phosphate degradation; D-tagatose 6-phosphate from D-galactose 6-phosphate: step 1/1. The sequence is that of Galactose-6-phosphate isomerase subunit LacB from Clostridium acetobutylicum (strain ATCC 824 / DSM 792 / JCM 1419 / IAM 19013 / LMG 5710 / NBRC 13948 / NRRL B-527 / VKM B-1787 / 2291 / W).